A 429-amino-acid chain; its full sequence is UDP-N-acetylglucosamine 1-carboxyvinyltransferase (429 aa).

22 to 23 (KN) is a phosphoenolpyruvate binding site. Position 102 (R102) interacts with UDP-N-acetyl-alpha-D-glucosamine. The Proton donor role is filled by C126. Position 126 is a 2-(S-cysteinyl)pyruvic acid O-phosphothioketal (C126). UDP-N-acetyl-alpha-D-glucosamine contacts are provided by residues 131–135 (RPVDL), D316, and I338.

This sequence belongs to the EPSP synthase family. MurA subfamily.

The protein resides in the cytoplasm. It catalyses the reaction phosphoenolpyruvate + UDP-N-acetyl-alpha-D-glucosamine = UDP-N-acetyl-3-O-(1-carboxyvinyl)-alpha-D-glucosamine + phosphate. Its pathway is cell wall biogenesis; peptidoglycan biosynthesis. Its function is as follows. Cell wall formation. Adds enolpyruvyl to UDP-N-acetylglucosamine. This is UDP-N-acetylglucosamine 1-carboxyvinyltransferase from Afipia carboxidovorans (strain ATCC 49405 / DSM 1227 / KCTC 32145 / OM5) (Oligotropha carboxidovorans).